We begin with the raw amino-acid sequence, 253 residues long: Tetraspanin-11 (253 aa).

Helical transmembrane passes span 19-39, 63-83, 93-113, and 220-240; these read LLFI…AVGI, VLIF…GAII, YFCL…LAHV, and LLLM…GMVL.

This sequence belongs to the tetraspanin (TM4SF) family.

The protein localises to the membrane. The sequence is that of Tetraspanin-11 (Tspan11) from Rattus norvegicus (Rat).